Consider the following 115-residue polypeptide: Evasin P1181 (115 aa).

A signal peptide spans 1-25; that stretch reads MALNWSFRVIFVSAMWCALLKFATL. Disulfide bonds link cysteine 38/cysteine 58, cysteine 54/cysteine 94, cysteine 70/cysteine 99, and cysteine 89/cysteine 108. Asparagine 45, asparagine 72, and asparagine 103 each carry an N-linked (GlcNAc...) asparagine glycan.

Its subcellular location is the secreted. Salivary chemokine-binding protein which binds to host chemokines CCL3 and CCL4. The polypeptide is Evasin P1181 (Amblyomma maculatum (Gulf Coast tick)).